The following is a 364-amino-acid chain: Peptide chain release factor 1 (364 aa).

N5-methylglutamine is present on Q237.

It belongs to the prokaryotic/mitochondrial release factor family. Post-translationally, methylated by PrmC. Methylation increases the termination efficiency of RF1.

The protein resides in the cytoplasm. Functionally, peptide chain release factor 1 directs the termination of translation in response to the peptide chain termination codons UAG and UAA. In Mycoplasma mycoides subsp. mycoides SC (strain CCUG 32753 / NCTC 10114 / PG1), this protein is Peptide chain release factor 1.